Here is a 354-residue protein sequence, read N- to C-terminus: Rhodopsin (354 aa).

Over 1–36 (MNGTEGPYFNVPMVNTTGIVRSPYEYPQYYLVSPAA) the chain is Extracellular. N2 and N15 each carry an N-linked (GlcNAc...) asparagine glycan. A helical transmembrane segment spans residues 37–61 (YAALGAYMFFLILVGFPINFLTLYV). The Cytoplasmic portion of the chain corresponds to 62-73 (TLEHKKLRTPLN). The helical transmembrane segment at 74–96 (YILLNLAVADLFMVFGGFTTTMY) threads the bilayer. Residues 97–110 (TSMHGYFVLGRLGC) lie on the Extracellular side of the membrane. Residues C110 and C187 are joined by a disulfide bond. The chain crosses the membrane as a helical span at residues 111–133 (NLEGFFATLGGEIGLWSLVVLAI). Residues 134 to 136 (ERW) carry the 'Ionic lock' involved in activated form stabilization motif. The Cytoplasmic portion of the chain corresponds to 134–152 (ERWVVVCKPISNFRFGENH). Residues 153–173 (AIMGLVFTWIMAASCAVPPLV) traverse the membrane as a helical segment. The Extracellular portion of the chain corresponds to 174–202 (GWSRYIPEGMQCSCGVDYYTRAEGFNNES). A helical transmembrane segment spans residues 203–224 (FVVYMFVCHFLIPLIVVFFCYG). Over 225–252 (RLLCAVKEAAAAQQESETTQRAEREVTR) the chain is Cytoplasmic. Residues 253–274 (MVVIMVIGFLVCWLPYASVAWY) traverse the membrane as a helical segment. The Extracellular segment spans residues 275–286 (IFTNQGSEFGPL). The chain crosses the membrane as a helical span at residues 287–308 (FMTIPAFFAKSSSIYNPAIYIC). The residue at position 296 (K296) is an N6-(retinylidene)lysine. Over 309-354 (MNKQFRNCMITTLCCGKNPFEEEEGASTTASKTEASSVSSSSVSPA) the chain is Cytoplasmic. S-palmitoyl cysteine attachment occurs at residues C322 and C323. The disordered stretch occupies residues 332–354 (EGASTTASKTEASSVSSSSVSPA). Over residues 334–354 (ASTTASKTEASSVSSSSVSPA) the composition is skewed to low complexity.

This sequence belongs to the G-protein coupled receptor 1 family. Opsin subfamily. Post-translationally, phosphorylated on some or all of the serine and threonine residues present in the C-terminal region. In terms of processing, contains one covalently linked retinal chromophore.

Its subcellular location is the membrane. It localises to the cell projection. The protein resides in the cilium. The protein localises to the photoreceptor outer segment. Photoreceptor required for image-forming vision at low light intensity. While most salt water fish species use retinal as chromophore, most freshwater fish use 3-dehydroretinal, or a mixture of retinal and 3-dehydroretinal. Light-induced isomerization of 11-cis to all-trans retinal triggers a conformational change that activates signaling via G-proteins. Subsequent receptor phosphorylation mediates displacement of the bound G-protein alpha subunit by arrestin and terminates signaling. The sequence is that of Rhodopsin (rho) from Oryzias latipes (Japanese rice fish).